The following is a 305-amino-acid chain: Ribosomal RNA large subunit methyltransferase F (305 aa).

The protein belongs to the methyltransferase superfamily. METTL16/RlmF family.

The protein localises to the cytoplasm. It catalyses the reaction adenosine(1618) in 23S rRNA + S-adenosyl-L-methionine = N(6)-methyladenosine(1618) in 23S rRNA + S-adenosyl-L-homocysteine + H(+). In terms of biological role, specifically methylates the adenine in position 1618 of 23S rRNA. The sequence is that of Ribosomal RNA large subunit methyltransferase F from Enterobacter sp. (strain 638).